A 433-amino-acid polypeptide reads, in one-letter code: C2H2 type master regulator of conidiophore development brlA (433 aa).

2 disordered regions span residues 23–64 (PSEC…SHYH) and 240–265 (KTHTPSTPHRSVSMGTPSGSDTPVSR). Low complexity predominate over residues 30–48 (TSSFSPLDSPTPTPTSLYS). The span at 240-264 (KTHTPSTPHRSVSMGTPSGSDTPVS) shows a compositional bias: polar residues. 2 C2H2-type zinc fingers span residues 321 to 345 (FKCKEPGCKGRFKRQEHLKRHMKSH) and 351 to 376 (HVCWIPGCHRAFSRSDNLNAHYTKTH). Residues 391–416 (ETSQDFDPDFRGQLTPDGRPIYGSKL) are disordered.

It is found in the nucleus. Its function is as follows. BrlA, abaA and wetA are pivotal regulators of conidiophore development and conidium maturation. They act individually and together to regulate their own expression and that of numerous other sporulation-specific genes. Binds promoters of target genes at brlA response elements (BREs) containing the conserved sequence 5'-(C/A)(A/G)AGGG(G/A)-3'. Is not required for penicillin V production. In Penicillium rubens (strain ATCC 28089 / DSM 1075 / NRRL 1951 / Wisconsin 54-1255) (Penicillium chrysogenum), this protein is C2H2 type master regulator of conidiophore development brlA.